A 120-amino-acid chain; its full sequence is Large ribosomal subunit protein bL12 (120 aa).

The protein belongs to the bacterial ribosomal protein bL12 family. Homodimer. Part of the ribosomal stalk of the 50S ribosomal subunit. Forms a multimeric L10(L12)X complex, where L10 forms an elongated spine to which 2 to 4 L12 dimers bind in a sequential fashion. Binds GTP-bound translation factors.

In terms of biological role, forms part of the ribosomal stalk which helps the ribosome interact with GTP-bound translation factors. Is thus essential for accurate translation. This Lachnoclostridium phytofermentans (strain ATCC 700394 / DSM 18823 / ISDg) (Clostridium phytofermentans) protein is Large ribosomal subunit protein bL12.